A 445-amino-acid chain; its full sequence is MLRLITQLSEAQTEIKRIAARTHSEQVQHQEATVREILQNVRRQGDEALLRYTLEFDQVRLAPGDLVVGAAELDAAYQRVSTSLLKAIRLAKQRIEQFHRERICKSWVQFQDRGIVLGRRYTPVDAAGLYIPGGRASYPSSVLMSAIPAVVAGVPRIVLVTPPNPEGKINPAVLVAAQESGVHEIYRIGGAQAIGALTYGTRTIAPVSVIAGPGNIYVTLAKKLVYGEVGIDSLAGPSEVLIIADSTANPVFLAADMLAQAEHDSLASAILITPDGRLAERTIEAVDRQLENHPRRTLTEKSLANYGLVIVTADLAEAAALSNLFAPEHLELEVEDPWELLEKVRHAGAIFLGHATPEAVGDYLAGPSHILPTSGTARYASGVGVETFQKCSSLVQYTPQALAEVGEAIDALTAAEGLPSHGDSVRLRLQQYENPHSPTQQQQEE.

Positions 130, 192, and 215 each coordinate NAD(+). Ser-238, Gln-260, and His-263 together coordinate substrate. Zn(2+) contacts are provided by Gln-260 and His-263. Active-site proton acceptor residues include Glu-328 and His-329. The substrate site is built by His-329, Asp-362, Glu-416, and His-421. Asp-362 provides a ligand contact to Zn(2+). His-421 contacts Zn(2+).

Belongs to the histidinol dehydrogenase family. The cofactor is Zn(2+).

It carries out the reaction L-histidinol + 2 NAD(+) + H2O = L-histidine + 2 NADH + 3 H(+). It participates in amino-acid biosynthesis; L-histidine biosynthesis; L-histidine from 5-phospho-alpha-D-ribose 1-diphosphate: step 9/9. In terms of biological role, catalyzes the sequential NAD-dependent oxidations of L-histidinol to L-histidinaldehyde and then to L-histidine. This Gloeobacter violaceus (strain ATCC 29082 / PCC 7421) protein is Histidinol dehydrogenase.